The following is a 132-amino-acid chain: MKKEGILNSELAKIADDLGHTDQVCIGDLGLPVPSGVKKIDLALTRGKPSFQEVLDIYLENILVEKVYLAEEIKENNPEQLAILLTKLSADVEIVFVSHETLKLMNHEVKAVVRTGENTPYSNIILQSGVAL.

Histidine 20 functions as the Proton donor in the catalytic mechanism. Substrate-binding positions include aspartate 28, histidine 99, and 121 to 123 (YSN).

It belongs to the RbsD / FucU family. RbsD subfamily. In terms of assembly, homodecamer.

Its subcellular location is the cytoplasm. It catalyses the reaction beta-D-ribopyranose = beta-D-ribofuranose. The protein operates within carbohydrate metabolism; D-ribose degradation; D-ribose 5-phosphate from beta-D-ribopyranose: step 1/2. Functionally, catalyzes the interconversion of beta-pyran and beta-furan forms of D-ribose. The chain is D-ribose pyranase from Lactococcus lactis subsp. lactis (strain IL1403) (Streptococcus lactis).